Consider the following 397-residue polypeptide: Xyloglucan O-acetyltransferase 3 (397 aa).

The Cytoplasmic portion of the chain corresponds to 1 to 3; the sequence is MNR. Residues 4-24 form a helical; Signal-anchor for type II membrane protein membrane-spanning segment; that stretch reads FFYTVGLIFLFSFFILYSPKT. Residues 25-397 are Lumenal-facing; it reads SDLSNNVDLH…RHAFTDFTWS (373 aa). Cystine bridges form between cysteine 48–cysteine 98, cysteine 69–cysteine 134, cysteine 78–cysteine 370, and cysteine 293–cysteine 366. Asparagine 66 carries N-linked (GlcNAc...) asparagine glycosylation. A GDS motif motif is present at residues 121-123; that stretch reads GDS. The Nucleophile role is filled by serine 123. N-linked (GlcNAc...) asparagine glycosylation is found at asparagine 162, asparagine 182, and asparagine 294. Residue aspartate 365 is the Proton donor of the active site. Residues 365–368 carry the DXXH motif motif; the sequence is DCVH. The active-site Proton acceptor is histidine 368.

The protein belongs to the PC-esterase family. TBL subfamily.

It is found in the golgi apparatus membrane. Its function is as follows. Xyloglucan acetyltransferase that catalyzes the acetylation of fucosylated Gal residues on xyloglucan side chains. Predominantly catalyze 6-O-monoacetylation of Gal residues in the Fuc-Gal-Xyl trisaccharide side chains of xyloglucan oligomers. The polypeptide is Xyloglucan O-acetyltransferase 3 (Populus trichocarpa (Western balsam poplar)).